We begin with the raw amino-acid sequence, 347 residues long: S-adenosylmethionine:tRNA ribosyltransferase-isomerase (347 aa).

The protein belongs to the QueA family. As to quaternary structure, monomer.

It is found in the cytoplasm. The enzyme catalyses 7-aminomethyl-7-carbaguanosine(34) in tRNA + S-adenosyl-L-methionine = epoxyqueuosine(34) in tRNA + adenine + L-methionine + 2 H(+). It participates in tRNA modification; tRNA-queuosine biosynthesis. Functionally, transfers and isomerizes the ribose moiety from AdoMet to the 7-aminomethyl group of 7-deazaguanine (preQ1-tRNA) to give epoxyqueuosine (oQ-tRNA). This chain is S-adenosylmethionine:tRNA ribosyltransferase-isomerase, found in Streptococcus thermophilus (strain ATCC BAA-491 / LMD-9).